A 60-amino-acid polypeptide reads, in one-letter code: MTCCNQQSSQPKTTTNCAESSCYKKTWSDHRGTRIERGCGCPQVKKGIKLECCHTNECNN.

4 disulfides stabilise this stretch: Cys3–Cys22, Cys17–Cys39, Cys41–Cys52, and Cys53–Cys58.

It belongs to the three-finger toxin family. Short-chain subfamily. Type I alpha-neurotoxin sub-subfamily. Expressed by the venom gland.

It localises to the secreted. Binds to muscle nicotinic acetylcholine receptor (nAChR) and inhibit acetylcholine from binding to the receptor, thereby impairing neuromuscular transmission. This is Short neurotoxin 1 from Hydrophis cyanocinctus (Asian annulated sea snake).